The following is a 323-amino-acid chain: RNA polymerase II holoenzyme cyclin-like subunit (323 aa).

A Cyclin N-terminal domain is found at 45–176; the sequence is DSKQNGIEQS…LLEELESYLI (132 aa).

This sequence belongs to the cyclin family. Cyclin C subfamily. In terms of assembly, component of the SRB8-11 complex which consists of SRB8, SSN2/SRB9, SSN3/SRB10 and SSN8/SRB11. The SRB8-11 complex associates with the Mediator complex. The SSN3/SRB10 and SSN8/SRB11 kinase-cyclin pair also associate with the RNA polymerase II holoenzyme. Interacts with ASK10.

The protein resides in the nucleus. Functionally, component of the SRB8-11 complex. The SRB8-11 complex is a regulatory module of the Mediator complex which is itself involved in regulation of basal and activated RNA polymerase II-dependent transcription. The SRB8-11 complex may be involved in the transcriptional repression of a subset of genes regulated by Mediator. It may inhibit the association of the Mediator complex with RNA polymerase II to form the holoenzyme complex. The SRB8-11 complex phosphorylates the C-terminal domain (CTD) of the largest subunit of RNA polymerase II RPB1 at serines 2 and 5. The SSN3/SRB10 and SSN8/SRB11 kinase-cyclin pair may also positively and negatively regulate numerous transcriptional activators in response to changes in nutritional and physiological conditions. The polypeptide is RNA polymerase II holoenzyme cyclin-like subunit (SSN8) (Saccharomyces cerevisiae (strain ATCC 204508 / S288c) (Baker's yeast)).